Consider the following 2000-residue polypeptide: E3 ubiquitin-protein ligase TTC3 (2000 aa).

The segment at 20–249 (MDDFAEGGLS…RHSCMQCVKQ (230 aa)) is interaction with POLG. 2 TPR repeats span residues 250-283 (GELM…RPEN) and 284-317 (HLLY…KNTW). Ser-397 bears the Phosphoserine mark. The interval 442-478 (CDCHPEFLPPPSQPPRHKGKQKSRNNESEKPSSNSQV) is disordered. TPR repeat units lie at residues 556–592 (VLVV…YPNE) and 596–629 (CLAY…ICRL). The tract at residues 804–828 (AQERMEEDLRESNPPKPEEPEETVE) is disordered. The residue at position 1029 (Ser-1029) is a Phosphoserine. Disordered stretches follow at residues 1041 to 1087 (NKGK…GPFA), 1233 to 1308 (FQPD…PEDA), 1423 to 1448 (QSST…SSDS), 1806 to 1839 (LEVK…QSQK), and 1894 to 1947 (EEQK…VPAP). Residues 1059-1070 (GTASVTPSSETV) are compositionally biased toward polar residues. Ser-1080 carries the post-translational modification Phosphoserine. Residues 1268–1277 (DSDSSSGSAS) show a composition bias toward low complexity. Positions 1829–1839 (GQATRSSQSQK) are enriched in polar residues. The span at 1894-1911 (EEQKKKKPNPGKDKKTSE) shows a compositional bias: basic and acidic residues. The segment covering 1912–1934 (AHPAASVSKSSPSPPLAAAGPSA) has biased composition (low complexity). Residues 1952–1991 (CQICHEIFKSKNMRVLKCGHKFHKGCFKQWLKGQSTCPTC) form an RING-type; atypical zinc finger.

As to quaternary structure, interacts (when phosphorylated on Ser-397) with AKT1, AKT2 and AKT3 (when phosphorylated). Interacts with CIT. Interacts with POLG. Interacts with HSP70. Interacts with SMURF2. Phosphorylation on Ser-397 by Akt is required for ubiquitin ligase activity. In terms of processing, proteolytically cleaved into differently sized N- and C-terminal fragments.

It localises to the nucleus. It is found in the cytoplasm. The protein localises to the golgi apparatus. The enzyme catalyses S-ubiquitinyl-[E2 ubiquitin-conjugating enzyme]-L-cysteine + [acceptor protein]-L-lysine = [E2 ubiquitin-conjugating enzyme]-L-cysteine + N(6)-ubiquitinyl-[acceptor protein]-L-lysine.. The protein operates within protein modification; protein ubiquitination. E3 ubiquitin-protein ligase which catalyzes the formation of 'Lys-48'-polyubiquitin chains. Mediates the ubiquitination and subsequent degradation of phosphorylated Akt (AKT1, AKT2 and AKT3) in the nucleus. Acts as a terminal regulator of Akt signaling after activation; its phosphorylation by Akt, which is a prerequisite for ubiquitin ligase activity, suggests the existence of a regulation mechanism required to control Akt levels after activation. Positively regulates TGFB1-induced epithelial-mesenchymal transition and myofibroblast differentiation by mediating the ubiquitination and subsequent degradation of SMURF2. Regulates neuronal differentiation by regulating actin remodeling and Golgi organization via a signaling cascade involving RHOA, CIT and ROCK. Inhibits cell proliferation. In Rattus norvegicus (Rat), this protein is E3 ubiquitin-protein ligase TTC3.